The primary structure comprises 507 residues: TOM1-like protein 2 (507 aa).

Positions 20-152 (ATDGSLQSED…ELKRKGVEFP (133 aa)) constitute a VHS domain. At Ser-160 the chain carries Phosphoserine. Residues 162-210 (IHTPQRSVPEVDPAATMPRSQSQQRTSAGSYSSPPPAPYSAPQAPALSV) form a disordered region. At Thr-164 the chain carries Phosphothreonine. In terms of domain architecture, GAT spans 219 to 307 (EQIARLRSEL…VFLRYERFER (89 aa)). The short motif at 329 to 334 (NLIDLG) is the Clathrin-binding element. The interval 467 to 507 (RAKAAEMVPDLPSPPMEAPAPASNPSGRKKPERSEDALFAL) is disordered. The segment covering 498-507 (ERSEDALFAL) has biased composition (basic and acidic residues).

This sequence belongs to the TOM1 family. In terms of assembly, interacts with clathrin, SRC and TOLLIP. Interacts with MYO6. As to expression, ubiquitously expressed with higher expression in heart and skeletal muscle.

In terms of biological role, acts as a MYO6/Myosin VI adapter protein that targets myosin VI to endocytic structures. May also play a role in recruiting clathrin to endosomes. May regulate growth factor-induced mitogenic signaling. This Homo sapiens (Human) protein is TOM1-like protein 2 (TOM1L2).